The following is a 551-amino-acid chain: Nicotianamine aminotransferase B (551 aa).

The tract at residues 24-127 is disordered; it reads KSNGHGVAAA…GHAAAAAEEE (104 aa). Positions 86–96 are enriched in basic and acidic residues; the sequence is GHRESNGHAEA. A compositionally biased stretch (low complexity) spans 111-123; sequence AANGESNGHAAAA. An N6-(pyridoxal phosphate)lysine modification is found at K379.

Belongs to the class-I pyridoxal-phosphate-dependent aminotransferase family. Pyridoxal 5'-phosphate is required as a cofactor. Expressed in roots, but not in leaves.

It carries out the reaction nicotianamine + 2-oxoglutarate = 3''-deamino-3''-oxonicotianamine + L-glutamate. In terms of biological role, involved in biosynthesis of mugineic acid family phytosiderophores. In Hordeum vulgare (Barley), this protein is Nicotianamine aminotransferase B.